The primary structure comprises 539 residues: MHDKILILDFGSQVTQLIARRVREAHVYCEIHPNDVSDAFVREFAPKAIILSGSHASTYEDHQLRAPQAVWDLGVPVLGICYGMQTMAVQLGGKVEWSDHREFGYAEMRAHGHTELLKDIEDFRTPEGHGMLKVWMSHGDKVTGLPPGFKLMASTPSCPIAGMADETRHYYAVQFHPEVTHTVKGRQMLERFVLQIAGCKPDWVMRDHIEEAVAKIREQVGDEEVILGLSGGVDSSVAAALIHRAIGDQLTCVFVDHGLLRQDEGKLVMEMFVGRLHAKVVHVDASEQFLGHLAGVTDPEQKRKIIGREFVEVFQAEARKLTNAKWLAQGTIYPDVVESGGTKTKKATTIKSHHNVGGLPETLGLKLLEPLRDLFKDEVRELGVELGLPPEMVYRHPFPGPGLGVRILGEVKRDYADLLRRADAIFIEELRKTIATEHDAAAGLCEPEQVGKSWYDLTSQAFAVFLPVKSVGVMGDGRTYDYVVALRAVQTTDFMTAHWAHLPYALLGRCSNRIINEVRGLNRVVYDVSGKPPATIEWE.

The Glutamine amidotransferase type-1 domain occupies lysine 4 to aspartate 202. Cysteine 81 serves as the catalytic Nucleophile. Active-site residues include histidine 176 and glutamate 178. The GMPS ATP-PPase domain maps to tryptophan 203–arginine 395. Serine 230 to serine 236 lines the ATP pocket.

Homodimer.

It carries out the reaction XMP + L-glutamine + ATP + H2O = GMP + L-glutamate + AMP + diphosphate + 2 H(+). The protein operates within purine metabolism; GMP biosynthesis; GMP from XMP (L-Gln route): step 1/1. Catalyzes the synthesis of GMP from XMP. The polypeptide is GMP synthase [glutamine-hydrolyzing] (Cupriavidus taiwanensis (strain DSM 17343 / BCRC 17206 / CCUG 44338 / CIP 107171 / LMG 19424 / R1) (Ralstonia taiwanensis (strain LMG 19424))).